An 89-amino-acid polypeptide reads, in one-letter code: Small ribosomal subunit protein uS15 (89 aa).

It belongs to the universal ribosomal protein uS15 family. In terms of assembly, part of the 30S ribosomal subunit. Forms a bridge to the 50S subunit in the 70S ribosome, contacting the 23S rRNA.

One of the primary rRNA binding proteins, it binds directly to 16S rRNA where it helps nucleate assembly of the platform of the 30S subunit by binding and bridging several RNA helices of the 16S rRNA. In terms of biological role, forms an intersubunit bridge (bridge B4) with the 23S rRNA of the 50S subunit in the ribosome. The polypeptide is Small ribosomal subunit protein uS15 (Rhizobium meliloti (strain 1021) (Ensifer meliloti)).